We begin with the raw amino-acid sequence, 571 residues long: MMNKESFGACLLLTLPEDVFAVISRFLSPSDICNLILCGKSLCALVDSEKTWLVQCEEVKVLPLIELVQWRIGISSYKALCRFLVEVVKPLLGIWVQENPELGNVVYVMPGFLSVVGCRIIPQKVAPLWIQEGQVKWSPVFEIICGFDGSKGFFLHGRDKQGSFLYPGFVMDIEKSCNVLLLEVEPRSEKSSCNEIEREVGDPFGDLDFSDRMNLLDIVTKHVSLRVDEPLTGNLFPTRSKYDEAMMLERRNMLLKMLKFGGNWKHINLEEDEQLCYNHIEIDIKKLLENLGDDIDNMEDIEDQIEVTPRKKSFRRFLRSGIKHILGKFSSSKINSPSSSETRRSNRQSFLSSGNTFCLSLKASCTLMSSYEGWPIMSADNFSLHKLPMKKPLDHDVYAGLWGGTFGWPPGKDIEDESLLLLMLTYGESEEGSERILFGTKILSYFAEHPNGSSMFVVNIDTPSLEPFPFDTDGRDFEHSYTGEGIADGYGFRYPGSKPGSLFVSSNDLLAFVWQGTEDVITLQRINLGEILKKSLGSCVSPLLPTKNFTYTKRSYSNVFAKSSTYSSSSE.

Residues 9 to 55 (ACLLLTLPEDVFAVISRFLSPSDICNLILCGKSLCALVDSEKTWLVQ) enclose the F-box domain.

The polypeptide is Putative F-box protein At5g39460 (Arabidopsis thaliana (Mouse-ear cress)).